The following is an 840-amino-acid chain: Heat shock 70 kDa protein 4 (840 aa).

Lys53 is modified (N6-acetyllysine). Residue Ser76 is modified to Phosphoserine. Phosphotyrosine occurs at positions 89 and 336. A phosphoserine mark is found at Ser393 and Ser415. Lys430 is modified (N6-acetyllysine). Positions 506–575 (NEEPMETDQN…QAKKAKVKTS (70 aa)) are disordered. Positions 514-533 (QNAKEEEKMQVDQEEPHAEE) are enriched in basic and acidic residues. Thr538 is subject to Phosphothreonine. Residues Ser546 and Ser647 each carry the phosphoserine modification. Residue Tyr660 is modified to Phosphotyrosine. An N6-acetyllysine modification is found at Lys679. At Ser756 the chain carries Phosphoserine. N6-methyllysine is present on Lys773. The segment at 782–840 (IISKPKPKVEPPKEEQKNAEQNGPVDGQGDSPGPQAAEQGTDTAVPSDSDKKLPEMDID) is disordered. Basic and acidic residues-rich tracts occupy residues 788–799 (PKVEPPKEEQKN) and 829–840 (DSDKKLPEMDID).

It belongs to the heat shock protein 70 family. As to quaternary structure, interacts with TJP1/ZO-1.

The protein localises to the cytoplasm. This Canis lupus familiaris (Dog) protein is Heat shock 70 kDa protein 4 (HSPA4).